The following is a 357-amino-acid chain: UDP-N-acetylglucosamine--N-acetylmuramyl-(pentapeptide) pyrophosphoryl-undecaprenol N-acetylglucosamine transferase (357 aa).

UDP-N-acetyl-alpha-D-glucosamine contacts are provided by residues Thr-12–Gly-14, Asn-124, Arg-163, Ser-189, Ile-243, Ala-262–Glu-267, and Gln-288.

It belongs to the glycosyltransferase 28 family. MurG subfamily.

It localises to the cell inner membrane. The enzyme catalyses di-trans,octa-cis-undecaprenyl diphospho-N-acetyl-alpha-D-muramoyl-L-alanyl-D-glutamyl-meso-2,6-diaminopimeloyl-D-alanyl-D-alanine + UDP-N-acetyl-alpha-D-glucosamine = di-trans,octa-cis-undecaprenyl diphospho-[N-acetyl-alpha-D-glucosaminyl-(1-&gt;4)]-N-acetyl-alpha-D-muramoyl-L-alanyl-D-glutamyl-meso-2,6-diaminopimeloyl-D-alanyl-D-alanine + UDP + H(+). It functions in the pathway cell wall biogenesis; peptidoglycan biosynthesis. In terms of biological role, cell wall formation. Catalyzes the transfer of a GlcNAc subunit on undecaprenyl-pyrophosphoryl-MurNAc-pentapeptide (lipid intermediate I) to form undecaprenyl-pyrophosphoryl-MurNAc-(pentapeptide)GlcNAc (lipid intermediate II). This Pseudomonas aeruginosa (strain LESB58) protein is UDP-N-acetylglucosamine--N-acetylmuramyl-(pentapeptide) pyrophosphoryl-undecaprenol N-acetylglucosamine transferase.